Here is a 486-residue protein sequence, read N- to C-terminus: Nucleolar GTP-binding protein 2 (486 aa).

The disordered stretch occupies residues 1–20 (MGTGKKEKSRRIREGDTKDG). S60, S85, and S155 each carry phosphoserine. The CP-type G domain occupies 212 to 373 (WNELYKVIDS…LIDCPGIVPP (162 aa)). Residues 322 to 329 (GYPNTGKS) and 366 to 370 (DCPGI) each bind GTP.

Belongs to the TRAFAC class YlqF/YawG GTPase family. NOG2 subfamily.

It localises to the nucleus. It is found in the nucleolus. In terms of biological role, GTPase that associates with pre-60S ribosomal subunits in the nucleolus and is required for their nuclear export and maturation. The sequence is that of Nucleolar GTP-binding protein 2 (NOG2) from Saccharomyces cerevisiae (strain ATCC 204508 / S288c) (Baker's yeast).